The sequence spans 143 residues: uncharacterized protein (143 aa).

Residues 1 to 21 form a disordered region; the sequence is MAAMDTGQRADPSNPGDKEGD.

This is an uncharacterized protein from Homo sapiens (Human).